A 267-amino-acid polypeptide reads, in one-letter code: Glutamate 5-kinase (267 aa).

Position 17 (Lys17) interacts with ATP. The substrate site is built by Ser57, Asp144, and Asn156. Residues 176–177 and 218–224 each bind ATP; these read SD and TGGMATK.

This sequence belongs to the glutamate 5-kinase family.

The protein resides in the cytoplasm. The enzyme catalyses L-glutamate + ATP = L-glutamyl 5-phosphate + ADP. Its pathway is amino-acid biosynthesis; L-proline biosynthesis; L-glutamate 5-semialdehyde from L-glutamate: step 1/2. Functionally, catalyzes the transfer of a phosphate group to glutamate to form L-glutamate 5-phosphate. The chain is Glutamate 5-kinase from Clostridium acetobutylicum (strain ATCC 824 / DSM 792 / JCM 1419 / IAM 19013 / LMG 5710 / NBRC 13948 / NRRL B-527 / VKM B-1787 / 2291 / W).